The chain runs to 333 residues: GTP 3',8-cyclase (333 aa).

In terms of domain architecture, Radical SAM core spans lysine 7 to glutamate 221. Arginine 16 is a GTP binding site. [4Fe-4S] cluster is bound by residues cysteine 23 and cysteine 27. S-adenosyl-L-methionine is bound at residue tyrosine 29. Cysteine 30 contacts [4Fe-4S] cluster. Arginine 66 is a GTP binding site. Residue glycine 70 coordinates S-adenosyl-L-methionine. Threonine 97 is a GTP binding site. Serine 121 serves as a coordination point for S-adenosyl-L-methionine. Residue lysine 158 participates in GTP binding. Methionine 192 provides a ligand contact to S-adenosyl-L-methionine. Residues cysteine 257 and cysteine 260 each contribute to the [4Fe-4S] cluster site. Arginine 262 to arginine 264 serves as a coordination point for GTP. Cysteine 274 serves as a coordination point for [4Fe-4S] cluster.

This sequence belongs to the radical SAM superfamily. MoaA family. In terms of assembly, monomer and homodimer. The cofactor is [4Fe-4S] cluster.

The catalysed reaction is GTP + AH2 + S-adenosyl-L-methionine = (8S)-3',8-cyclo-7,8-dihydroguanosine 5'-triphosphate + 5'-deoxyadenosine + L-methionine + A + H(+). It functions in the pathway cofactor biosynthesis; molybdopterin biosynthesis. Its function is as follows. Catalyzes the cyclization of GTP to (8S)-3',8-cyclo-7,8-dihydroguanosine 5'-triphosphate. The sequence is that of GTP 3',8-cyclase from Listeria monocytogenes serovar 1/2a (strain ATCC BAA-679 / EGD-e).